A 158-amino-acid polypeptide reads, in one-letter code: NADH-quinone oxidoreductase subunit B 2 (158 aa).

Residues Cys37, Cys38, Cys102, and Cys132 each contribute to the [4Fe-4S] cluster site.

It belongs to the complex I 20 kDa subunit family. As to quaternary structure, NDH-1 is composed of 14 different subunits. Subunits NuoB, C, D, E, F, and G constitute the peripheral sector of the complex. [4Fe-4S] cluster serves as cofactor.

It is found in the cell inner membrane. The enzyme catalyses a quinone + NADH + 5 H(+)(in) = a quinol + NAD(+) + 4 H(+)(out). In terms of biological role, NDH-1 shuttles electrons from NADH, via FMN and iron-sulfur (Fe-S) centers, to quinones in the respiratory chain. Couples the redox reaction to proton translocation (for every two electrons transferred, four hydrogen ions are translocated across the cytoplasmic membrane), and thus conserves the redox energy in a proton gradient. This is NADH-quinone oxidoreductase subunit B 2 from Acidithiobacillus ferrooxidans (strain ATCC 53993 / BNL-5-31) (Leptospirillum ferrooxidans (ATCC 53993)).